We begin with the raw amino-acid sequence, 540 residues long: Zinc metalloproteinase nas-10 (540 aa).

The region spanning 293-500 (ASIFFEQNLI…VEILNKMYCK (208 aa)) is the Peptidase M12A domain. Disulfide bonds link Cys339/Cys499, Cys365/Cys385, Cys504/Cys540, Cys511/Cys533, and Cys520/Cys537. Residue His394 coordinates Zn(2+). The active site involves Glu395. 2 residues coordinate Zn(2+): His398 and His404. A ShKT domain is found at 504–540 (CDDKNVYCGAWALQDLCNNPNHNVWMRSNCRKSCNFC).

Zn(2+) is required as a cofactor.

In terms of biological role, metalloprotease. The chain is Zinc metalloproteinase nas-10 from Caenorhabditis elegans.